Consider the following 339-residue polypeptide: Bifunctional phosphoglucose/phosphomannose isomerase (339 aa).

Positions 22–164 (ISVNVKAEDI…IEPVDDQIEE (143 aa)) constitute an SIS domain. Residues glycine 41, serine 42, serine 83, serine 85, threonine 88, and arginine 135 each coordinate D-fructose 6-phosphate. The active-site Proton acceptor is the glutamate 221. Positions 237 and 331 each coordinate D-fructose 6-phosphate. The Proton donor role is filled by histidine 237. The active-site Proton acceptor is the lysine 331.

It belongs to the PGI/PMI family. In terms of assembly, homodimer.

It carries out the reaction alpha-D-glucose 6-phosphate = beta-D-fructose 6-phosphate. It catalyses the reaction D-mannose 6-phosphate = D-fructose 6-phosphate. Functionally, dual specificity isomerase that catalyzes the isomerization of both glucose-6-phosphate and mannose-6-phosphate to fructose-6-phosphate. This is Bifunctional phosphoglucose/phosphomannose isomerase from Caldicellulosiruptor bescii (strain ATCC BAA-1888 / DSM 6725 / KCTC 15123 / Z-1320) (Anaerocellum thermophilum).